The primary structure comprises 637 residues: Threonine--tRNA ligase (637 aa).

One can recognise a TGS domain in the interval 1 to 61 (MPNVKLPDGN…KEDCSLIIVT (61 aa)). Residues 242–533 (DHRKLGKALD…LIEHYAGKLP (292 aa)) form a catalytic region. Zn(2+) contacts are provided by Cys333, His384, and His510.

It belongs to the class-II aminoacyl-tRNA synthetase family. As to quaternary structure, homodimer. Zn(2+) is required as a cofactor.

The protein resides in the cytoplasm. The catalysed reaction is tRNA(Thr) + L-threonine + ATP = L-threonyl-tRNA(Thr) + AMP + diphosphate + H(+). Catalyzes the attachment of threonine to tRNA(Thr) in a two-step reaction: L-threonine is first activated by ATP to form Thr-AMP and then transferred to the acceptor end of tRNA(Thr). Also edits incorrectly charged L-seryl-tRNA(Thr). This is Threonine--tRNA ligase from Legionella pneumophila (strain Corby).